Consider the following 526-residue polypeptide: NAD(P)H-quinone oxidoreductase chain 4 1 (526 aa).

14 consecutive transmembrane segments (helical) span residues 7–27 (FPWL…IPLL), 35–55 (WYAL…FGWH), 86–106 (LSFP…VAAW), 114–134 (LFFF…LAQD), 135–155 (LLLF…LIAI), 168–188 (FILY…AMAF), 208–228 (ALQI…LPVF), 242–262 (SAPI…YGLI), 276–296 (FAPV…LAAL), 310–330 (IAHM…GLNG), 331–351 (ALLQ…LTGI), 374–396 (AFAL…GFVG), 417–437 (GIAL…LSML), and 463–483 (MAVA…PRLA).

It belongs to the complex I subunit 4 family.

Its subcellular location is the cellular thylakoid membrane. It carries out the reaction a plastoquinone + NADH + (n+1) H(+)(in) = a plastoquinol + NAD(+) + n H(+)(out). The catalysed reaction is a plastoquinone + NADPH + (n+1) H(+)(in) = a plastoquinol + NADP(+) + n H(+)(out). Its function is as follows. NDH-1 shuttles electrons from NAD(P)H, via FMN and iron-sulfur (Fe-S) centers, to quinones in the respiratory chain. The immediate electron acceptor for the enzyme in this species is believed to be plastoquinone. Couples the redox reaction to proton translocation (for every two electrons transferred, four hydrogen ions are translocated across the cytoplasmic membrane), and thus conserves the redox energy in a proton gradient. The chain is NAD(P)H-quinone oxidoreductase chain 4 1 from Synechococcus sp. (strain JA-3-3Ab) (Cyanobacteria bacterium Yellowstone A-Prime).